We begin with the raw amino-acid sequence, 429 residues long: Fumarylacetoacetase (429 aa).

Ca(2+) is bound at residue Asp139. Catalysis depends on His146, which acts as the Proton acceptor. Arg155 lines the substrate pocket. Residues Glu212, Glu214, and Asp246 each coordinate Ca(2+). Asp246 contacts Mg(2+). Substrate is bound at residue Gln253. Mg(2+) contacts are provided by Lys266 and Thr270. Residue Thr363 coordinates substrate.

It belongs to the FAH family. Requires Ca(2+) as cofactor. Mg(2+) serves as cofactor.

The catalysed reaction is 4-fumarylacetoacetate + H2O = acetoacetate + fumarate + H(+). It participates in amino-acid degradation; L-phenylalanine degradation; acetoacetate and fumarate from L-phenylalanine: step 6/6. Its function is as follows. Converts fumarylacetoacetate to acetoacetate and fumarate. Involved in tyrosine catabolic pathway. Catalyzes the final step in the tyrosine degradation pathway. The chain is Fumarylacetoacetase from Oryza sativa subsp. japonica (Rice).